Reading from the N-terminus, the 375-residue chain is MAATTPAQDVGVEIYLGPVWPAPSNSTPLALNLSLALREDAPGNLTGDLSEHQQYVIALFLSCLYTIFLFPIGFVGNILILVVNISFREKMTIPDLYFINLAAADLILVADSLIEVFNLDEQYYDIAVLCTFMSLFLQINMYSSVFFLTWMSFDRYLALAKAMRCGLFRTKHHARLSCGLIWMASVSATLVPFTAVHLRHTEEACFCFADVREVQWLEVTLGFIVPFAIIGLCYSLIVRALIRAHRHRGLRPRRQKALRMIFAVVLVFFICWLPENVFISVHLLQWAQPGDTPCKQSFRHAYPLTGHIVNLAAFSNSCLSPLIYSFLGETFRDKLRLYVAQKTSLPALNRFCHATLKAVIPDSTEQSDVKFSSAV.

N-acetylmethionine is present on methionine 1. The Extracellular portion of the chain corresponds to 1–62; the sequence is MAATTPAQDV…QQYVIALFLS (62 aa). Asparagine 32 and asparagine 44 each carry an N-linked (GlcNAc...) asparagine glycan. Residues 63–84 form a helical membrane-spanning segment; sequence CLYTIFLFPIGFVGNILILVVN. Residues 85–96 lie on the Cytoplasmic side of the membrane; that stretch reads ISFREKMTIPDL. Residues 97 to 120 form a helical membrane-spanning segment; the sequence is YFINLAAADLILVADSLIEVFNLD. The Extracellular segment spans residues 121–132; it reads EQYYDIAVLCTF. An intrachain disulfide couples cysteine 130 to cysteine 207. A helical membrane pass occupies residues 133-153; it reads MSLFLQINMYSSVFFLTWMSF. Over 154–175 the chain is Cytoplasmic; sequence DRYLALAKAMRCGLFRTKHHAR. The helical transmembrane segment at 176-194 threads the bilayer; that stretch reads LSCGLIWMASVSATLVPFT. The Extracellular segment spans residues 195–220; sequence AVHLRHTEEACFCFADVREVQWLEVT. Residues 221 to 236 traverse the membrane as a helical segment; the sequence is LGFIVPFAIIGLCYSL. Residues 237–259 are Cytoplasmic-facing; that stretch reads IVRALIRAHRHRGLRPRRQKALR. A helical membrane pass occupies residues 260–280; that stretch reads MIFAVVLVFFICWLPENVFIS. Over 281-306 the chain is Extracellular; the sequence is VHLLQWAQPGDTPCKQSFRHAYPLTG. The chain crosses the membrane as a helical span at residues 307 to 327; that stretch reads HIVNLAAFSNSCLSPLIYSFL. Over 328-375 the chain is Cytoplasmic; the sequence is GETFRDKLRLYVAQKTSLPALNRFCHATLKAVIPDSTEQSDVKFSSAV.

Belongs to the G-protein coupled receptor 1 family. In terms of assembly, homodimer. Heterodimer; heterodimerizes with other G-protein-coupled receptor (GPCRs) like CRHR1, HTR1A and PAQR8. Interacts with RAMP3; the interaction confers proper subcellular localization and function in cardioprotection. Interacts with KRT7 and KRT8. Interacts with EGFR; the interaction increases after agonist-induced stimulation in cancer-associated fibroblasts (CAF). Interacts with EGFR and ESR1. Interacts (via C-terminus tail motif) with DLG4 (via N-terminus tandem pair of PDZ domains); the interaction is direct and induces the increase of GPER1 protein levels residing at the plasma membrane surface in a estradiol-independent manner. Post-translationally, ubiquitinated; ubiquitination occurs at the plasma membrane and leads to proteasome-mediated degradation. In terms of processing, glycosylated. As to expression, expressed in the brain. Expressed in neurons of the hippocampus, hypothalamic paraventricular nucleus (PVN), supraoptic nucleus (SON) and the median eminence. Expressed in magnocellular neurosecretory cells (MNCs) which secrete oxytocin but not in MNCs which secrete vasopressin. Expressed in glial cells. Expressed in the nucleus ambiguous. Expressed in epithelial cells, in pachytene spermatocytes (PS) (at protein level). Expressed strongly in vascular endothelial cells and poorly in vascular smooth muscle cells (VSMC). Expressed in the brain, lung, pituitary gland, adrenal medulla, renal pelvis and ovary. Expressed in CA1 hippocampus. Expressed weakly in heart, skeletal muscle and kidney.

Its subcellular location is the nucleus. The protein localises to the cytoplasm. It localises to the perinuclear region. The protein resides in the cytoskeleton. It is found in the cytoplasmic vesicle membrane. Its subcellular location is the cell membrane. The protein localises to the basolateral cell membrane. It localises to the endoplasmic reticulum membrane. The protein resides in the early endosome. It is found in the recycling endosome. Its subcellular location is the golgi apparatus. The protein localises to the trans-Golgi network. It localises to the golgi apparatus membrane. The protein resides in the cell projection. It is found in the dendrite. Its subcellular location is the dendritic spine membrane. The protein localises to the axon. It localises to the postsynaptic density. The protein resides in the mitochondrion membrane. In terms of biological role, G-protein coupled estrogen receptor that binds to 17-beta-estradiol (E2) with high affinity, leading to rapid and transient activation of numerous intracellular signaling pathways. Stimulates cAMP production, calcium mobilization and tyrosine kinase Src inducing the release of heparin-bound epidermal growth factor (HB-EGF) and subsequent transactivation of the epidermal growth factor receptor (EGFR), activating downstream signaling pathways such as PI3K/Akt and ERK/MAPK. Mediates pleiotropic functions among others in the cardiovascular, endocrine, reproductive, immune and central nervous systems. Has a role in cardioprotection by reducing cardiac hypertrophy and perivascular fibrosis in a RAMP3-dependent manner. Regulates arterial blood pressure by stimulating vasodilation and reducing vascular smooth muscle and microvascular endothelial cell proliferation. Plays a role in blood glucose homeostasis contributing to the insulin secretion response by pancreatic beta cells. Triggers mitochondrial apoptosis during pachytene spermatocyte differentiation. Stimulates uterine epithelial cell proliferation. Enhances uterine contractility in response to oxytocin. Contributes to thymic atrophy by inducing apoptosis. Attenuates TNF-mediated endothelial expression of leukocyte adhesion molecules. Promotes neuritogenesis in developing hippocampal neurons. Plays a role in acute neuroprotection against NMDA-induced excitotoxic neuronal death. Increases firing activity and intracellular calcium oscillations in luteinizing hormone-releasing hormone (LHRH) neurons. Inhibits early osteoblast proliferation at growth plate during skeletal development. Inhibits mature adipocyte differentiation and lipid accumulation. Involved in the recruitment of beta-arrestin 2 ARRB2 at the plasma membrane in epithelial cells. Also functions as a receptor for aldosterone mediating rapid regulation of vascular contractibility through the PI3K/ERK signaling pathway. Involved in cancer progression regulation. Stimulates cancer-associated fibroblast (CAF) proliferation by a rapid genomic response through the EGFR/ERK transduction pathway. Associated with EGFR, may act as a transcription factor activating growth regulatory genes (c-fos, cyclin D1). Promotes integrin alpha-5/beta-1 and fibronectin (FN) matrix assembly in breast cancer cells. In Rattus norvegicus (Rat), this protein is G-protein coupled estrogen receptor 1 (Gper1).